The following is a 506-amino-acid chain: Glutamate--tRNA ligase (506 aa).

Positions 12-22 (PSPTGDPHVGT) match the 'HIGH' region motif. A 'KMSKS' region motif is present at residues 253-257 (KLSKR). Lys256 is a binding site for ATP.

The protein belongs to the class-I aminoacyl-tRNA synthetase family. Glutamate--tRNA ligase type 1 subfamily. As to quaternary structure, monomer.

Its subcellular location is the cytoplasm. It catalyses the reaction tRNA(Glu) + L-glutamate + ATP = L-glutamyl-tRNA(Glu) + AMP + diphosphate. In terms of biological role, catalyzes the attachment of glutamate to tRNA(Glu) in a two-step reaction: glutamate is first activated by ATP to form Glu-AMP and then transferred to the acceptor end of tRNA(Glu). The protein is Glutamate--tRNA ligase of Chlamydia trachomatis serovar L2 (strain ATCC VR-902B / DSM 19102 / 434/Bu).